The primary structure comprises 187 residues: Cell division protein SepF (187 aa).

The interval 21–97 (EVEVPDKQQQ…ATPNNASQES (77 aa)) is disordered. Composition is skewed to polar residues over residues 38-63 (EQSQ…YTTT) and 70-97 (RMSN…SQES).

The protein belongs to the SepF family. As to quaternary structure, homodimer. Interacts with FtsZ.

Its subcellular location is the cytoplasm. Cell division protein that is part of the divisome complex and is recruited early to the Z-ring. Probably stimulates Z-ring formation, perhaps through the cross-linking of FtsZ protofilaments. Its function overlaps with FtsA. This is Cell division protein SepF from Staphylococcus aureus (strain MRSA252).